Reading from the N-terminus, the 305-residue chain is Glycine--tRNA ligase alpha subunit (305 aa).

This sequence belongs to the class-II aminoacyl-tRNA synthetase family. In terms of assembly, tetramer of two alpha and two beta subunits.

The protein resides in the cytoplasm. It carries out the reaction tRNA(Gly) + glycine + ATP = glycyl-tRNA(Gly) + AMP + diphosphate. This Streptococcus pneumoniae (strain CGSP14) protein is Glycine--tRNA ligase alpha subunit.